A 79-amino-acid chain; its full sequence is MENIEQRVKKIVAEQLGVNESEIKTESSFVDDLGADSLDTVELVMALEEEFECEIPDEEAEKITTVQQAIDYVTAHLKK.

Residues 2–77 (ENIEQRVKKI…QAIDYVTAHL (76 aa)) form the Carrier domain. O-(pantetheine 4'-phosphoryl)serine is present on Ser-37.

The protein belongs to the acyl carrier protein (ACP) family. Post-translationally, 4'-phosphopantetheine is transferred from CoA to a specific serine of apo-ACP by AcpS. This modification is essential for activity because fatty acids are bound in thioester linkage to the sulfhydryl of the prosthetic group.

It localises to the cytoplasm. It functions in the pathway lipid metabolism; fatty acid biosynthesis. In terms of biological role, carrier of the growing fatty acid chain in fatty acid biosynthesis. The sequence is that of Acyl carrier protein from Aromatoleum aromaticum (strain DSM 19018 / LMG 30748 / EbN1) (Azoarcus sp. (strain EbN1)).